We begin with the raw amino-acid sequence, 313 residues long: Protease HtpX homolog (313 aa).

Transmembrane regions (helical) follow at residues 7-24 (AMLL…GYLI) and 29-46 (GMMI…FSYW). H130 contributes to the Zn(2+) binding site. E131 is a catalytic residue. H134 contacts Zn(2+). The next 2 helical transmembrane spans lie at 145–165 (ITAT…FFGG) and 172–192 (PFGF…AMVV). E201 serves as a coordination point for Zn(2+). A disordered region spans residues 282 to 313 (GNAPPASLREDEPGADGPWGRSASRARKGPWS).

Belongs to the peptidase M48B family. Requires Zn(2+) as cofactor.

Its subcellular location is the cell inner membrane. This chain is Protease HtpX homolog, found in Chelativorans sp. (strain BNC1).